The sequence spans 275 residues: Dermonecrotic toxin SpeSicTox-betaIIA3ii (275 aa).

H5 is an active-site residue. Mg(2+) is bound by residues E25 and D27. The active-site Nucleophile is the H41. Disulfide bonds link C45–C51 and C47–C190. D85 lines the Mg(2+) pocket.

It belongs to the arthropod phospholipase D family. Class II subfamily. Requires Mg(2+) as cofactor. Expressed by the venom gland.

Its subcellular location is the secreted. The catalysed reaction is an N-(acyl)-sphingosylphosphocholine = an N-(acyl)-sphingosyl-1,3-cyclic phosphate + choline. It carries out the reaction an N-(acyl)-sphingosylphosphoethanolamine = an N-(acyl)-sphingosyl-1,3-cyclic phosphate + ethanolamine. It catalyses the reaction a 1-acyl-sn-glycero-3-phosphocholine = a 1-acyl-sn-glycero-2,3-cyclic phosphate + choline. The enzyme catalyses a 1-acyl-sn-glycero-3-phosphoethanolamine = a 1-acyl-sn-glycero-2,3-cyclic phosphate + ethanolamine. In terms of biological role, dermonecrotic toxins cleave the phosphodiester linkage between the phosphate and headgroup of certain phospholipids (sphingolipid and lysolipid substrates), forming an alcohol (often choline) and a cyclic phosphate. This toxin acts on sphingomyelin (SM). It may also act on ceramide phosphoethanolamine (CPE), lysophosphatidylcholine (LPC) and lysophosphatidylethanolamine (LPE), but not on lysophosphatidylserine (LPS), and lysophosphatidylglycerol (LPG). It acts by transphosphatidylation, releasing exclusively cyclic phosphate products as second products. Induces dermonecrosis, hemolysis, increased vascular permeability, edema, inflammatory response, and platelet aggregation. This Sicarius peruensis (Six-eyed sand spider) protein is Dermonecrotic toxin SpeSicTox-betaIIA3ii.